The chain runs to 787 residues: Bifunctional dethiobiotin synthetase/adenosylmethionine-8-amino-7-oxononanoate aminotransferase (787 aa).

23 to 28 (DVGKTI) is an ATP binding site. Residue Thr27 coordinates Mg(2+). Thr54 contacts substrate. 2 residues coordinate Mg(2+): Asp61 and Glu123. ATP-binding positions include 123-126 (ETAG) and 184-185 (KD). Residue 323–324 (WW) participates in (8S)-8-amino-7-oxononanoate binding. 384 to 385 (GS) provides a ligand contact to pyridoxal 5'-phosphate. (8S)-8-amino-7-oxononanoate is bound at residue Tyr421. Pyridoxal 5'-phosphate is bound at residue Asp582. 2 residues coordinate (8S)-8-amino-7-oxononanoate: Lys611 and Gly645. 646–647 (HS) contacts pyridoxal 5'-phosphate. Residue Arg756 participates in (8S)-8-amino-7-oxononanoate binding.

In the N-terminal section; belongs to the dethiobiotin synthetase family. It in the C-terminal section; belongs to the class-III pyridoxal-phosphate-dependent aminotransferase family. BioA subfamily. In terms of assembly, homodimer. Mg(2+) is required as a cofactor. Requires pyridoxal 5'-phosphate as cofactor.

Its subcellular location is the mitochondrion matrix. The enzyme catalyses (7R,8S)-7,8-diammoniononanoate + CO2 + ATP = (4R,5S)-dethiobiotin + ADP + phosphate + 3 H(+). It carries out the reaction (8S)-8-amino-7-oxononanoate + S-adenosyl-L-methionine = S-adenosyl-4-methylsulfanyl-2-oxobutanoate + (7R,8S)-7,8-diammoniononanoate. It functions in the pathway cofactor biosynthesis; biotin biosynthesis; biotin from 7,8-diaminononanoate: step 1/2. The protein operates within cofactor biosynthesis; biotin biosynthesis; 7,8-diaminononanoate from 8-amino-7-oxononanoate (SAM route): step 1/1. In terms of biological role, bifunctional enzyme; part of the cluster involved in the biosynthesis of biotin (also known as vitamin B8 or vitamin H), a water-soluble vitamin that functions as a prosthetic group of many carboxylases, such as acetyl-CoA carboxylase and pyruvate carboxylase. Catalyzes a mechanistically unusual reaction, the ATP-dependent insertion of CO2 between the N7 and N8 nitrogen atoms of 7,8-diaminopelargonic acid (DAPA) to form an ureido ring. Also catalyzes the transfer of the alpha-amino group from S-adenosyl-L-methionine (SAM) to 7-keto-8-aminopelargonic acid (KAPA) to form 7,8-diaminopelargonic acid (DAPA). It is the only animotransferase known to utilize SAM as an amino donor. This chain is Bifunctional dethiobiotin synthetase/adenosylmethionine-8-amino-7-oxononanoate aminotransferase, found in Emericella nidulans (strain FGSC A4 / ATCC 38163 / CBS 112.46 / NRRL 194 / M139) (Aspergillus nidulans).